Here is a 392-residue protein sequence, read N- to C-terminus: Riboflavin biosynthesis protein PYRD, chloroplastic (392 aa).

Residues 1-26 (MASSLVSRPHLTQRPVRAATLASATR) constitute a chloroplast transit peptide. Positions 46 to 168 (LDDAHYMRRC…KLQGAGISVR (123 aa)) constitute a CMP/dCMP-type deaminase domain. H95 contributes to the Zn(2+) binding site. E97 acts as the Proton donor in catalysis. The Zn(2+) site is built by C120 and C129.

Zn(2+) is required as a cofactor.

Its subcellular location is the plastid. It localises to the chloroplast. It carries out the reaction 2,5-diamino-6-hydroxy-4-(5-phosphoribosylamino)-pyrimidine + H2O + H(+) = 5-amino-6-(5-phospho-D-ribosylamino)uracil + NH4(+). The protein operates within cofactor biosynthesis; riboflavin biosynthesis; 5-amino-6-(D-ribitylamino)uracil from GTP: step 2/4. Monofunctional pyrimidine deaminase involved in the riboflavin biosynthesis pathway. Also has a reductase domain that lacks catalytically essential substrate-binding residues. In Zea mays (Maize), this protein is Riboflavin biosynthesis protein PYRD, chloroplastic (PYRD).